Here is a 335-residue protein sequence, read N- to C-terminus: MKSLMLVVLGNTEISTVPGISVAGATPELTKLTPPADAEYLFYEKPKIIDVIPVTPDGHPTPAIITKAARELANFPLMIVRGGTYLAPLVPHVHISDYVGRDFRKGPALQEAEEIIARARLFGEELSNTPIEELVIGESTPGGTTTAQAVLWALGYEARTSSAAPNNPQSLKEEVIKAGFERAGIKPGDFKEKPLEALKQFGDPMMAAVVGIALGFKGKVVLAGGTQMLAVAALLKALEEDMSRFMIATTKWVVNDRSATFIDTAKDIGIITYAADLDFSKSEFKGLRDYENGYVKEGVGAGGATWLAVKAGFSPEDVSRKVDELYRRLMELKAT.

It belongs to the UPF0284 family.

This chain is UPF0284 protein TON_0688, found in Thermococcus onnurineus (strain NA1).